The chain runs to 670 residues: DNA ligase (670 aa).

Residues 32–36 (DAEYD), 81–82 (SL), and E110 contribute to the NAD(+) site. The active-site N6-AMP-lysine intermediate is the K112. Residues R133, E170, K289, and K313 each contribute to the NAD(+) site. Zn(2+) is bound by residues C407, C410, C425, and C431. Residues 590 to 670 (ESQLSLKGQT…ALMDLLNAAN (81 aa)) enclose the BRCT domain.

This sequence belongs to the NAD-dependent DNA ligase family. LigA subfamily. Mg(2+) serves as cofactor. Mn(2+) is required as a cofactor.

It carries out the reaction NAD(+) + (deoxyribonucleotide)n-3'-hydroxyl + 5'-phospho-(deoxyribonucleotide)m = (deoxyribonucleotide)n+m + AMP + beta-nicotinamide D-nucleotide.. In terms of biological role, DNA ligase that catalyzes the formation of phosphodiester linkages between 5'-phosphoryl and 3'-hydroxyl groups in double-stranded DNA using NAD as a coenzyme and as the energy source for the reaction. It is essential for DNA replication and repair of damaged DNA. This chain is DNA ligase, found in Shewanella frigidimarina (strain NCIMB 400).